The primary structure comprises 414 residues: Snake venom metalloproteinase atrolysin-D (414 aa).

The first 20 residues, 1–20 (MIEVLLVTICLAVFPYQGSS), serve as a signal peptide directing secretion. The propeptide occupies 21-190 (IILESGNVND…KASDLNLNPD (170 aa)). The residue at position 191 (Q191) is a Pyrrolidone carboxylic acid. A Peptidase M12B domain is found at 197–393 (RYIELVVVAD…YKPQCILNKP (197 aa)). Ca(2+)-binding residues include E200 and D284. Cystine bridges form between C308-C388 and C348-C355. H333 provides a ligand contact to Zn(2+). E334 is an active-site residue. Zn(2+) is bound by residues H337 and H343. The Ca(2+) site is built by C388 and N391. Positions 394–414 (LRIDPVSTPVSGNELLEAGEE) are excised as a propeptide.

This sequence belongs to the venom metalloproteinase (M12B) family. P-I subfamily. As to quaternary structure, monomer. Zn(2+) serves as cofactor. The N-terminus is blocked. In terms of tissue distribution, expressed by the venom gland.

The protein localises to the secreted. It carries out the reaction Cleavage of 5-His-|-Leu-6, 10-His-|-Leu-11, 14-Ala-|-Leu-15, 16-Tyr-|-Leu-17 and 23-Gly-|-Phe-24 of insulin B chain. With small molecule substrates prefers hydrophobic residue at P2' and small residue such as Ala, Gly at P1.. Functionally, snake venom zinc metalloproteinase that causes hemorrhage by provoking the degradation of the sub-endothelial matrix proteins (fibronectin, laminin, type IV collagen, nidogen, and gelatins). The protein is Snake venom metalloproteinase atrolysin-D of Crotalus atrox (Western diamondback rattlesnake).